A 218-amino-acid polypeptide reads, in one-letter code: Large ribosomal subunit protein uL3 (218 aa).

The disordered stretch occupies residues 121–163 (GYQKRHGFSRGPMTHGSKNHREPGSIGPGTTPGRIYPGKRMAG).

The protein belongs to the universal ribosomal protein uL3 family. In terms of assembly, part of the 50S ribosomal subunit. Forms a cluster with proteins L14 and L19.

Its function is as follows. One of the primary rRNA binding proteins, it binds directly near the 3'-end of the 23S rRNA, where it nucleates assembly of the 50S subunit. This is Large ribosomal subunit protein uL3 from Parasynechococcus marenigrum (strain WH8102).